Here is a 90-residue protein sequence, read N- to C-terminus: Molybdopterin synthase sulfur carrier subunit (90 aa).

Residue G90 is modified to 1-thioglycine; alternate. G90 is subject to Glycyl adenylate; alternate.

It belongs to the MoaD family. MOCS2A subfamily. Heterotetramer; composed of 2 small (Mocs2A) and 2 large (Mocs2B) subunits. Post-translationally, C-terminal thiocarboxylation occurs in 2 steps, it is first acyl-adenylated (-COAMP) via the hesA/moeB/thiF part of MOCS3, then thiocarboxylated (-COSH) via the rhodanese domain of MOCS3.

It is found in the cytoplasm. It functions in the pathway cofactor biosynthesis; molybdopterin biosynthesis. Its function is as follows. Acts as a sulfur carrier required for molybdopterin biosynthesis. Component of the molybdopterin synthase complex that catalyzes the conversion of precursor Z into molybdopterin by mediating the incorporation of 2 sulfur atoms into precursor Z to generate a dithiolene group. In the complex, serves as sulfur donor by being thiocarboxylated (-COSH) at its C-terminus by MOCS3. After interaction with Mocs2B, the sulfur is then transferred to precursor Z to form molybdopterin. This Drosophila simulans (Fruit fly) protein is Molybdopterin synthase sulfur carrier subunit.